Reading from the N-terminus, the 273-residue chain is Endoplasmic reticulum resident protein 27 (273 aa).

The signal sequence occupies residues methionine 1–alanine 25. The Thioredoxin domain maps to glutamate 39–valine 152. N-linked (GlcNAc...) asparagine glycosylation occurs at asparagine 100. The interval aspartate 230 to aspartate 233 is PDIA3-binding site. The Prevents secretion from ER motif lies at lysine 270 to leucine 273.

The protein belongs to the protein disulfide isomerase family. As to quaternary structure, interacts with PDIA3.

The protein localises to the endoplasmic reticulum lumen. In terms of biological role, specifically binds unfolded proteins and may recruit protein disulfide isomerase PDIA3 to unfolded substrates. Binds protein substrates via a hydrophobic pocket in the C-terminal domain. May play a role in the unfolded stress response. This chain is Endoplasmic reticulum resident protein 27 (ERP27), found in Homo sapiens (Human).